The primary structure comprises 840 residues: Leucine--tRNA ligase (840 aa).

A 'HIGH' region motif is present at residues 44 to 55; the sequence is PYPSANGLHVGH. A 'KMSKS' region motif is present at residues 617–621; that stretch reads KMSKS. Lysine 620 provides a ligand contact to ATP.

This sequence belongs to the class-I aminoacyl-tRNA synthetase family.

It localises to the cytoplasm. It catalyses the reaction tRNA(Leu) + L-leucine + ATP = L-leucyl-tRNA(Leu) + AMP + diphosphate. In Borreliella burgdorferi (strain ZS7) (Borrelia burgdorferi), this protein is Leucine--tRNA ligase.